The primary structure comprises 380 residues: MTIMRKKHPLLKMINHSFIDLPTPSNISSWWNFGSLLGMCLMIQILTGLFLAMHYTSDTTTAFSSVAHICRDVNYGWLIRYLHANGASMFFICLFIHVGRGIYYGSYMLLETWNIGIVLLLTTMATAFVGYVLPWGQMSFWGATVITNLLSAIPYXGNTLVEWIWGGFSVDKATLTRFFAFHFILPFIITALVLVHLLFLHETGSNNPSGLDSNSDKIPFHPYYTIKDLLGALILLMVLMILVLFFPDVLGDPDNYTPANPLNTPAHIKPEWYFLFAYAILRSIPNKLGGVLALILSILILATLPLLNSSKQHGLIYRPITQALYWIFVANLLTXTWIGGQPVEXPFTLIGXIASXLXFXIIIIFMPIASTIXNNIPXLH.

Helical transmembrane passes span 33–53 (FGSLLGMCLMIQILTGLFLAM), 77–98 (WLIRYLHANGASMFFICLFIHV), 113–133 (WNIGIVLLLTTMATAFVGYVL), and 178–198 (FFAFHFILPFIITALVLVHLL). Residues histidine 83 and histidine 97 each coordinate heme b. Positions 182 and 196 each coordinate heme b. Histidine 201 lines the a ubiquinone pocket. The next 4 membrane-spanning stretches (helical) occupy residues 226–246 (IKDLLGALILLMVLMILVLFF), 288–308 (LGGVLALILSILILATLPLLN), 320–340 (ITQALYWIFVANLLTXTWIGG), and 347–367 (FTLIGXIASXLXFXIIIIFMP).

It belongs to the cytochrome b family. As to quaternary structure, the cytochrome bc1 complex contains 11 subunits: 3 respiratory subunits (MT-CYB, CYC1 and UQCRFS1), 2 core proteins (UQCRC1 and UQCRC2) and 6 low-molecular weight proteins (UQCRH/QCR6, UQCRB/QCR7, UQCRQ/QCR8, UQCR10/QCR9, UQCR11/QCR10 and a cleavage product of UQCRFS1). This cytochrome bc1 complex then forms a dimer. Heme b serves as cofactor.

It is found in the mitochondrion inner membrane. Its function is as follows. Component of the ubiquinol-cytochrome c reductase complex (complex III or cytochrome b-c1 complex) that is part of the mitochondrial respiratory chain. The b-c1 complex mediates electron transfer from ubiquinol to cytochrome c. Contributes to the generation of a proton gradient across the mitochondrial membrane that is then used for ATP synthesis. The polypeptide is Cytochrome b (MT-CYB) (Rhipidomys wetzeli (Wetzel's climbing mouse)).